Reading from the N-terminus, the 284-residue chain is NAD kinase (284 aa).

Asp-70 functions as the Proton acceptor in the catalytic mechanism. Residues 70-71 (DG), 139-140 (NE), Lys-167, Asp-169, Leu-177, 180-185 (TAYNLS), and Gln-236 each bind NAD(+).

The protein belongs to the NAD kinase family. Requires a divalent metal cation as cofactor.

The protein localises to the cytoplasm. The catalysed reaction is NAD(+) + ATP = ADP + NADP(+) + H(+). In terms of biological role, involved in the regulation of the intracellular balance of NAD and NADP, and is a key enzyme in the biosynthesis of NADP. Catalyzes specifically the phosphorylation on 2'-hydroxyl of the adenosine moiety of NAD to yield NADP. This Helicobacter pylori (strain HPAG1) protein is NAD kinase.